A 55-amino-acid chain; its full sequence is Large ribosomal subunit protein bL33 (55 aa).

The protein belongs to the bacterial ribosomal protein bL33 family.

The chain is Large ribosomal subunit protein bL33 from Sphingopyxis alaskensis (strain DSM 13593 / LMG 18877 / RB2256) (Sphingomonas alaskensis).